The chain runs to 375 residues: MAGTPGHPIFLLLLLRAIGQVSPYSTHWKPTWPAYRLPVVLPQSTFNLAKPDFGAEAKLEVSSSCGPQCHKGTPLPTYEEAKQYLSYETLYANGSRTETQVGIYVLRSGEEQSSGKSRRKRQIYGYDSRFSIFGKDFLLNYPFSTSVKLSTGCTGTLVAEKHVLTAAHCIHDGKTYVKGTQKLRVGFLKPKFKDGRGANDSHSALPEKMKFQWIRVKRTHVPKGWIKGNANDIGMDYDYALLELKKPHKRKFMKIGVSPPAKQLPGGRIHFSGYDNDRPGNLVYRFCDVQDETYDLLYQQCDAQPGASGSGVYVRMWKRQQQKWERKIIGIFSGHQWVDVNGSPQDFNVAVRITPLKYAQICYWIKGNYVDCREG.

An N-terminal signal peptide occupies residues Met-1–Pro-23. Asn-93 is a glycosylation site (N-linked (GlcNAc...) asparagine). Cys-153 and Cys-169 are joined by a disulfide. Catalysis depends on His-168, which acts as the Charge relay system. Asn-199 carries N-linked (GlcNAc...) asparagine glycosylation. Residues Asp-232 and Ser-308 each act as charge relay system in the active site.

The protein belongs to the peptidase S1 family.

Its subcellular location is the secreted. The protein is Serine protease 23 (PRSS23) of Bos taurus (Bovine).